Here is a 133-residue protein sequence, read N- to C-terminus: Nickel-responsive regulator (133 aa).

Positions 76, 87, 89, and 95 each coordinate Ni(2+).

This sequence belongs to the transcriptional regulatory CopG/NikR family. In terms of assembly, homotetramer. Ni(2+) is required as a cofactor.

In terms of biological role, transcriptional repressor of the nikABCDE operon. Is active in the presence of excessive concentrations of intracellular nickel. This chain is Nickel-responsive regulator, found in Escherichia fergusonii (strain ATCC 35469 / DSM 13698 / CCUG 18766 / IAM 14443 / JCM 21226 / LMG 7866 / NBRC 102419 / NCTC 12128 / CDC 0568-73).